A 395-amino-acid polypeptide reads, in one-letter code: tRNA-specific 2-thiouridylase MnmA (395 aa).

Residues 7–14 (GLSGGVDS) and Met33 each bind ATP. The interval 95 to 97 (NPD) is interaction with target base in tRNA. Catalysis depends on Cys100, which acts as the Nucleophile. A disulfide bridge links Cys100 with Cys200. Gly124 contacts ATP. Residues 150–152 (KDQ) form an interaction with tRNA region. Cys200 acts as the Cysteine persulfide intermediate in catalysis. Residues 346–347 (RY) form an interaction with tRNA region.

This sequence belongs to the MnmA/TRMU family.

The protein resides in the cytoplasm. It carries out the reaction S-sulfanyl-L-cysteinyl-[protein] + uridine(34) in tRNA + AH2 + ATP = 2-thiouridine(34) in tRNA + L-cysteinyl-[protein] + A + AMP + diphosphate + H(+). Catalyzes the 2-thiolation of uridine at the wobble position (U34) of tRNA, leading to the formation of s(2)U34. The sequence is that of tRNA-specific 2-thiouridylase MnmA from Christiangramia forsetii (strain DSM 17595 / CGMCC 1.15422 / KT0803) (Gramella forsetii).